A 149-amino-acid chain; its full sequence is Putative pre-16S rRNA nuclease (149 aa).

It belongs to the YqgF nuclease family.

The protein resides in the cytoplasm. Functionally, could be a nuclease involved in processing of the 5'-end of pre-16S rRNA. The polypeptide is Putative pre-16S rRNA nuclease (Burkholderia orbicola (strain MC0-3)).